The chain runs to 193 residues: dCTP deaminase (193 aa).

DCTP contacts are provided by residues 110-115 (RSSLAR), aspartate 128, 136-138 (VLE), tyrosine 171, lysine 178, and glutamine 182. The active-site Proton donor/acceptor is the glutamate 138. Positions 170 to 181 (PYNRRQDAKYRD) are enriched in basic and acidic residues. The interval 170–193 (PYNRRQDAKYRDQQGAVASRIDKD) is disordered.

This sequence belongs to the dCTP deaminase family. Homotrimer.

The enzyme catalyses dCTP + H2O + H(+) = dUTP + NH4(+). The protein operates within pyrimidine metabolism; dUMP biosynthesis; dUMP from dCTP (dUTP route): step 1/2. Functionally, catalyzes the deamination of dCTP to dUTP. This Enterobacter sp. (strain 638) protein is dCTP deaminase.